The chain runs to 668 residues: Biosynthetic arginine decarboxylase (668 aa).

Lys105 is subject to N6-(pyridoxal phosphate)lysine. 286-296 serves as a coordination point for substrate; it reads LDVGGGLGVDY.

The protein belongs to the Orn/Lys/Arg decarboxylase class-II family. SpeA subfamily. Requires Mg(2+) as cofactor. Pyridoxal 5'-phosphate is required as a cofactor.

The enzyme catalyses L-arginine + H(+) = agmatine + CO2. Its function is as follows. Catalyzes the biosynthesis of agmatine from arginine. This is Biosynthetic arginine decarboxylase from Rhodopirellula baltica (strain DSM 10527 / NCIMB 13988 / SH1).